The chain runs to 479 residues: Glutamyl-tRNA(Gln) amidotransferase subunit A (479 aa).

Active-site charge relay system residues include Lys-71 and Ser-146. Catalysis depends on Ser-170, which acts as the Acyl-ester intermediate.

It belongs to the amidase family. GatA subfamily. As to quaternary structure, heterotrimer of A, B and C subunits.

The catalysed reaction is L-glutamyl-tRNA(Gln) + L-glutamine + ATP + H2O = L-glutaminyl-tRNA(Gln) + L-glutamate + ADP + phosphate + H(+). Functionally, allows the formation of correctly charged Gln-tRNA(Gln) through the transamidation of misacylated Glu-tRNA(Gln) in organisms which lack glutaminyl-tRNA synthetase. The reaction takes place in the presence of glutamine and ATP through an activated gamma-phospho-Glu-tRNA(Gln). The protein is Glutamyl-tRNA(Gln) amidotransferase subunit A of Lactobacillus johnsonii (strain CNCM I-12250 / La1 / NCC 533).